Consider the following 438-residue polypeptide: MNTNDIRTVKGEKSLQGTIKVPGDKSISHRSLIIGSIAEGETNIEGFLYSEDPLSTADCLRKLGVHIPEIKKDQPFTIRGLGIDGFREPKEILNCGNSGTTMRLLMGLLAGQTDRNFILTGDKSLNERPMGRVSKPLSLMGGKIYGRENGTKAPISITGNKLKGCVIGTPVASAQVKSAILLAGLNASGTTSVIEPASSRDHTERMLKAFGADIKIRGELGRNIVIKSGNNLTGQNILIPGDISSAAFWMIAASIVPESEILVKNVGLNPTRTGILHVMDEMGCDYKIIEKSTIAGEPIGSIKVKYVSNLKPFKVQGDILPKLIDEIPILTVAACFCNGVSEIKDAKELRVKETDRLKVMARQLKKFGANITEKEDGLIITGESKFHSAEVDSETDHRVSMSLAIASLLAKGSTRIARAGASNVSYPTFWDDLEKLIN.

The 3-phosphoshikimate site is built by K25, S26, and R30. K25 serves as a coordination point for phosphoenolpyruvate. The phosphoenolpyruvate site is built by G99 and R128. The 3-phosphoshikimate site is built by S173, Q175, D325, and K352. Position 175 (Q175) interacts with phosphoenolpyruvate. The active-site Proton acceptor is the D325. R356 and R398 together coordinate phosphoenolpyruvate.

The protein belongs to the EPSP synthase family. In terms of assembly, monomer.

Its subcellular location is the cytoplasm. It catalyses the reaction 3-phosphoshikimate + phosphoenolpyruvate = 5-O-(1-carboxyvinyl)-3-phosphoshikimate + phosphate. It functions in the pathway metabolic intermediate biosynthesis; chorismate biosynthesis; chorismate from D-erythrose 4-phosphate and phosphoenolpyruvate: step 6/7. Catalyzes the transfer of the enolpyruvyl moiety of phosphoenolpyruvate (PEP) to the 5-hydroxyl of shikimate-3-phosphate (S3P) to produce enolpyruvyl shikimate-3-phosphate and inorganic phosphate. The chain is 3-phosphoshikimate 1-carboxyvinyltransferase from Prochlorococcus marinus (strain MIT 9515).